We begin with the raw amino-acid sequence, 256 residues long: Nuclear shuttle protein (256 aa).

The Bipartite nuclear localization signal signature appears at 21–42; sequence NYGFKRTFVVKRGDAKRRQTQV. A Nuclear localization signal motif is present at residues 81–96; the sequence is QLCKTQPNRSRSYIKL. The tract at residues 150–187 is interaction with Arabidopsis thaliana NSI protein; the sequence is ELFGARIHSLGNLAVTPALKERFYILHVLKRVISVEKD.

It belongs to the begomovirus nuclear shuttle protein family. Binds to single-stranded and double-stranded viral DNA. Interacts with the host nuclear shuttle interacting (NSI) protein. This interaction may allow NSP to recruit NSI monomers to the viral genome and thus regulate nuclear export of viral genome by NSP.

It is found in the host nucleus. The protein resides in the host cytoplasm. Its subcellular location is the host cell membrane. In terms of biological role, binds to the genomic viral ssDNA, shuttles it into and out of the cell nucleus. Begomoviruses use 2 proteins to transport their DNA from cell to cell. The nuclear shuttle protein (NSP) shuttles it between nucleus and cytoplasm and the movement protein (MP) probably transports the DNA-NSP complex to the cell periphery and facilitates movement across the cell wall. In Pepper huasteco yellow vein virus (PHYVV), this protein is Nuclear shuttle protein.